A 173-amino-acid chain; its full sequence is Alpha-crystallin A chain (173 aa).

Met-1 bears the N-acetylmethionine mark. Positions 1 to 63 (MDVTIQHPWF…RTVLDSGISE (63 aa)) are required for complex formation with BFSP1 and BFSP2. Position 6 is a deamidated glutamine; partial (Gln-6). A Phosphoserine modification is found at Ser-45. Residue Gln-50 is modified to Deamidated glutamine; partial. The region spanning 52–162 (LFRTVLDSGI…GHSERAIPVS (111 aa)) is the sHSP domain. N6-acetyllysine is present on residues Lys-70 and Lys-99. His-100 contacts Zn(2+). Asn-101 is modified (deamidated asparagine; partial). Zn(2+) is bound by residues Glu-102 and His-107. Residue Ser-122 is modified to Phosphoserine. A Deamidated asparagine; partial modification is found at Asn-123. A disordered region spans residues 145 to 173 (KVQSGLDAGHSERAIPVSREEKPSSAPSS). Gln-147 carries the post-translational modification Deamidated glutamine; partial. Basic and acidic residues predominate over residues 153 to 167 (GHSERAIPVSREEKP). His-154 is a binding site for Zn(2+). An O-linked (GlcNAc) serine glycan is attached at Ser-162.

It belongs to the small heat shock protein (HSP20) family. Heteromer composed of three CRYAA and one CRYAB subunits. Inter-subunit bridging via zinc ions enhances stability, which is crucial as there is no protein turn over in the lens. Can also form homodimers and homotetramers (dimers of dimers) which serve as the building blocks of homooligomers. Within homooligomers, the zinc-binding motif is created from residues of 3 different molecules. His-100 and Glu-102 from one molecule are ligands of the zinc ion, and His-107 and His-154 residues from additional molecules complete the site with tetrahedral coordination geometry. Part of a complex required for lens intermediate filament formation composed of BFSP1, BFSP2 and CRYAA. Post-translationally, acetylation at Lys-70 may increase chaperone activity. Undergoes age-dependent proteolytical cleavage at the C-terminus.

The protein resides in the cytoplasm. Its subcellular location is the nucleus. In terms of biological role, contributes to the transparency and refractive index of the lens. Acts as a chaperone, preventing aggregation of various proteins under a wide range of stress conditions. Required for the correct formation of lens intermediate filaments as part of a complex composed of BFSP1, BFSP2 and CRYAA. This chain is Alpha-crystallin A chain (CRYAA), found in Meriones unguiculatus (Mongolian jird).